Reading from the N-terminus, the 1314-residue chain is Tetratricopeptide repeat protein 21A (1314 aa).

TPR repeat units lie at residues 110 to 143, 214 to 247, 326 to 359, 494 to 527, 529 to 561, 565 to 598, 616 to 649, 721 to 754, 755 to 788, 790 to 821, 831 to 863, 883 to 916, 918 to 950, 951 to 984, 986 to 1018, 1022 to 1055, 1195 to 1228, 1230 to 1262, and 1264 to 1297; these read STAL…SSGS, LPAL…DENN, ALVA…EENR, MEPL…DPTF, DAHL…NFQV, PLYH…PTSK, ASIL…FSGT, PHSS…NPHD, ASLV…SGQD, LCCE…DSGV, VKCL…QSRI, ASIC…SPTD, KVVL…EQTH, ERAA…APDN, LVLN…SSRV, PGFN…STWG, EKSW…NKSC, RAYE…SHQA, and PAIG…HPKY.

The protein belongs to the TTC21 family. In terms of assembly, interacts with IFT20. Interacts with IFT52. Interacts with IFT140. Interacts with CEP78; regulating IFT20 stability and localization.

Its function is as follows. Intraflagellar transport (IFT)-associated protein required for spermatogenesis. Required for sperm flagellar formation and intraflagellar transport. The protein is Tetratricopeptide repeat protein 21A (Ttc21a) of Mus musculus (Mouse).